The following is a 148-amino-acid chain: Large ribosomal subunit protein bL9 (148 aa).

The protein belongs to the bacterial ribosomal protein bL9 family.

Binds to the 23S rRNA. The polypeptide is Large ribosomal subunit protein bL9 (Thermus thermophilus (strain ATCC BAA-163 / DSM 7039 / HB27)).